The sequence spans 343 residues: 3-oxopimeloyl-[acyl-carrier-protein] synthase (343 aa).

Residues Cys-132 and His-272 contribute to the active site. The ACP-binding stretch occupies residues 273 to 277 (QANHR). Residue Asn-302 is part of the active site.

The protein belongs to the thiolase-like superfamily. BioZ family.

It catalyses the reaction malonyl-[ACP] + an acyl-CoA + H(+) = a 3-oxoacyl-[ACP] + CO2 + CoA. The enzyme catalyses glutaryl-CoA + malonyl-[ACP] + H(+) = 3-oxo-6-carboxyhexanoyl-[ACP] + CO2 + CoA. The protein operates within cofactor biosynthesis; biotin biosynthesis. Its function is as follows. Involved in the formation of the biotin precursor pimeloyl-ACP. Catalyzes the condensation of glutaryl-CoA, an intermediate in lysine degradation, with malonyl-ACP to produce 3-oxopimeloyl-ACP. The protein is 3-oxopimeloyl-[acyl-carrier-protein] synthase of Rhodothermus marinus (strain ATCC 43812 / DSM 4252 / R-10) (Rhodothermus obamensis).